Here is a 90-residue protein sequence, read N- to C-terminus: Antitoxin epsilon (90 aa).

Belongs to the epsilon antitoxin family. As to quaternary structure, in the presence of the zeta toxin, forms an inactive PezA(2)PezT(2) heterotetramer.

Its function is as follows. Antitoxin component of a type II toxin-antitoxin (TA) system. Neutralizes the toxic effect of cognate zeta toxin. Part of a postsegregational killing (PSK) system involved in the killing of plasmid-free cells. Continuous synthesis of the epsilon antitoxin is required to counteract the zeta toxin. The sequence is that of Antitoxin epsilon from Streptococcus agalactiae.